A 214-amino-acid polypeptide reads, in one-letter code: A-type ATP synthase subunit D (214 aa).

This sequence belongs to the V-ATPase D subunit family. In terms of assembly, has multiple subunits with at least A(3), B(3), C, D, E, F, H, I and proteolipid K(x).

Its subcellular location is the cell membrane. Functionally, component of the A-type ATP synthase that produces ATP from ADP in the presence of a proton gradient across the membrane. The sequence is that of A-type ATP synthase subunit D from Pyrococcus abyssi (strain GE5 / Orsay).